A 1529-amino-acid polypeptide reads, in one-letter code: ABC multidrug transporter AFR2 (1529 aa).

The segment covering 1–10 (MAFAGVGQGL) has biased composition (gly residues). The tract at residues 1 to 21 (MAFAGVGQGLGTYDRTEQTSG) is disordered. An ABC transporter 1 domain is found at 144-394 (GALRDLISNR…FVDMGFHCPS (251 aa)). N-linked (GlcNAc...) asparagine glycans are attached at residues Asn235 and Asn318. 5 helical membrane-spanning segments follow: residues 505–525 (LTLT…SVFY), 539–559 (ALLF…ILIL), 589–609 (IPYK…MTNL), 614–634 (GPYF…SMLF), and 648–668 (LAPA…AVNV). Asn742 carries an N-linked (GlcNAc...) asparagine glycan. A helical transmembrane segment spans residues 757-777 (GILIGFFLFFTAIYMTATEFI). One can recognise an ABC transporter 2 domain in the interval 845 to 1087 (FSWKDVVYDI…ILIDYFEKNG (243 aa)). Position 881–888 (881–888 (GVSGAGKT)) interacts with ATP. Helical transmembrane passes span 1193–1213 (YIWS…FSFF), 1227–1247 (FSVF…MPNF), 1268–1288 (IFIL…GAVI), 1314–1334 (LMFL…IMIV), and 1353–1373 (MCLI…FWMF). Asn1434 carries N-linked (GlcNAc...) asparagine glycosylation. A helical membrane pass occupies residues 1465–1485 (FGLLWAYVVFNIIAAVGIYWL). A disordered region spans residues 1493-1529 (GKEQASEPEGVQEKLVPAQSSEKKRESVSRGSESTAA).

The protein belongs to the ABC transporter superfamily. ABCG family. PDR (TC 3.A.1.205) subfamily.

It localises to the cell membrane. The catalysed reaction is itraconazole(in) + ATP + H2O = itraconazole(out) + ADP + phosphate + H(+). It carries out the reaction voriconazole(in) + ATP + H2O = voriconazole(out) + ADP + phosphate + H(+). It catalyses the reaction fluconazole(in) + ATP + H2O = fluconazole(out) + ADP + phosphate + H(+). In terms of biological role, pleiotropic ABC efflux transporter that confers resistance to structurally and functionally unrelated compounds including azoles such as fluconazole (FLC), itraconazole (ITC), posaconazole (POS), and voriconazole (VRC). The chain is ABC multidrug transporter AFR2 from Cryptococcus neoformans var. grubii serotype A (strain H99 / ATCC 208821 / CBS 10515 / FGSC 9487) (Filobasidiella neoformans var. grubii).